The following is a 191-amino-acid chain: UPF0669 protein C6orf120 (191 aa).

The signal sequence occupies residues 1–30 (MAAPRGRAAPWTTALLLLLASQVLSPGSCA). Asn53 carries an N-linked (GlcNAc...) asparagine glycan.

This sequence belongs to the UPF0669 family. In terms of tissue distribution, mainly expressed in hepatocytes and some weak expression in germinal center cells of lymph nodes.

It is found in the secreted. Its function is as follows. May be involved in induction of apoptosis in CD4(+) T-cells, but not CD8(+) T-cells or hepatocytes. This chain is UPF0669 protein C6orf120 (C6orf120), found in Homo sapiens (Human).